A 250-amino-acid chain; its full sequence is tRNA-specific adenosine deaminase subunit TAD2 (250 aa).

The CMP/dCMP-type deaminase domain occupies 1–119 (MQHIKHMRTA…ERFGGNGTVL (119 aa)). His-54 lines the Zn(2+) pocket. Glu-56 serves as the catalytic Proton donor. The Zn(2+) site is built by Cys-88 and Cys-91.

It belongs to the cytidine and deoxycytidylate deaminase family. ADAT2 subfamily. In terms of assembly, heterodimer with TAD3. The cofactor is Zn(2+).

The protein resides in the cytoplasm. It is found in the nucleus. The enzyme catalyses adenosine(34) in tRNA + H2O + H(+) = inosine(34) in tRNA + NH4(+). In terms of biological role, structural subunit of tRNA-specific adenosine deaminase, which deaminates adenosine-34 (the first, also called wobble position of the anticodon) to inosine in many tRNAs. Inosine-34 allows the decoding of 3 different nucleotides at the third position of mRNA codons, as inosine is able to pair with U, C, and A. The chain is tRNA-specific adenosine deaminase subunit TAD2 (TAD2) from Saccharomyces cerevisiae (strain ATCC 204508 / S288c) (Baker's yeast).